The chain runs to 162 residues: Ribosome-binding factor A (162 aa).

The tract at residues 124–162 is disordered; the sequence is ARVRSGAKPAGEADPYRESGSGVEPGRDGSIGDDDQPEY.

This sequence belongs to the RbfA family. Monomer. Binds 30S ribosomal subunits, but not 50S ribosomal subunits or 70S ribosomes.

Its subcellular location is the cytoplasm. Functionally, one of several proteins that assist in the late maturation steps of the functional core of the 30S ribosomal subunit. Associates with free 30S ribosomal subunits (but not with 30S subunits that are part of 70S ribosomes or polysomes). Required for efficient processing of 16S rRNA. May interact with the 5'-terminal helix region of 16S rRNA. The chain is Ribosome-binding factor A from Mycolicibacterium paratuberculosis (strain ATCC BAA-968 / K-10) (Mycobacterium paratuberculosis).